The sequence spans 670 residues: Rhophilin-1 (670 aa).

The segment at 1–20 is disordered; that stretch reads MILEERPDGAGAGEESPRLQ. Residues 23-97 form the REM-1 domain; sequence DSLTQIQCGQ…LEELSGGVDP (75 aa). Residue Ser24 is modified to Phosphoserine. Residues 108–457 form the BRO1 domain; it reads PMIPLGLKET…LAKYAELDRE (350 aa). Residues 513 to 592 form the PDZ domain; sequence PVHLTRGEGG…ASLQVVSLLP (80 aa). The segment at 616–670 is disordered; it reads QREHGCKTPASTWASPRPLLNWSRKAQQGKTGGCPQPCAPVKPAPPSSLKHPGWP. Residues 652-661 show a composition bias toward pro residues; sequence PCAPVKPAPP.

The protein belongs to the RHPN family. As to quaternary structure, binds specifically to GTP-Rho. Interacts with ROPN1.

Has no enzymatic activity. May serve as a target for Rho, and interact with some cytoskeletal component upon Rho binding or relay a Rho signal to other molecules. This chain is Rhophilin-1, found in Homo sapiens (Human).